Reading from the N-terminus, the 653-residue chain is Mannosyl-oligosaccharide 1,2-alpha-mannosidase IA (653 aa).

The Cytoplasmic portion of the chain corresponds to 1–41 (MPVGGLLPLFSSPAGGVLGGGLGGGGGRKGSGPAALRLTEK). A helical; Signal-anchor for type II membrane protein transmembrane segment spans residues 42–62 (FVLLLVFSAFITLCFGAIFFL). Topologically, residues 63 to 653 (PDSSKLLSGV…DKKEVEIREE (591 aa)) are lumenal. The disordered stretch occupies residues 81-116 (QPAADHKPGPGARAEDAAEGRARRREEGAPGDPEAA). The span at 84–108 (ADHKPGPGARAEDAAEGRARRREEG) shows a compositional bias: basic and acidic residues. Cys476 and Cys508 form a disulfide bridge. Residue Asn513 is glycosylated (N-linked (GlcNAc...) asparagine). Residue Glu522 is the Proton donor of the active site.

Belongs to the glycosyl hydrolase 47 family. Ca(2+) serves as cofactor.

It localises to the golgi apparatus membrane. It carries out the reaction N(4)-(alpha-D-Man-(1-&gt;2)-alpha-D-Man-(1-&gt;2)-alpha-D-Man-(1-&gt;3)-[alpha-D-Man-(1-&gt;2)-alpha-D-Man-(1-&gt;3)-[alpha-D-Man-(1-&gt;2)-alpha-D-Man-(1-&gt;6)]-alpha-D-Man-(1-&gt;6)]-beta-D-Man-(1-&gt;4)-beta-D-GlcNAc-(1-&gt;4)-beta-D-GlcNAc)-L-asparaginyl-[protein] (N-glucan mannose isomer 9A1,2,3B1,2,3) + 4 H2O = N(4)-(alpha-D-Man-(1-&gt;3)-[alpha-D-Man-(1-&gt;3)-[alpha-D-Man-(1-&gt;6)]-alpha-D-Man-(1-&gt;6)]-beta-D-Man-(1-&gt;4)-beta-D-GlcNAc-(1-&gt;4)-beta-D-GlcNAc)-L-asparaginyl-[protein] (N-glucan mannose isomer 5A1,2) + 4 beta-D-mannose. It catalyses the reaction N(4)-(alpha-D-Man-(1-&gt;2)-alpha-D-Man-(1-&gt;2)-alpha-D-Man-(1-&gt;3)-[alpha-D-Man-(1-&gt;3)-[alpha-D-Man-(1-&gt;2)-alpha-D-Man-(1-&gt;6)]-alpha-D-Man-(1-&gt;6)]-beta-D-Man-(1-&gt;4)-beta-D-GlcNAc-(1-&gt;4)-beta-D-GlcNAc)-L-asparaginyl-[protein] (N-glucan mannose isomer 8A1,2,3B1,3) + 3 H2O = N(4)-(alpha-D-Man-(1-&gt;3)-[alpha-D-Man-(1-&gt;3)-[alpha-D-Man-(1-&gt;6)]-alpha-D-Man-(1-&gt;6)]-beta-D-Man-(1-&gt;4)-beta-D-GlcNAc-(1-&gt;4)-beta-D-GlcNAc)-L-asparaginyl-[protein] (N-glucan mannose isomer 5A1,2) + 3 beta-D-mannose. It participates in protein modification; protein glycosylation. Inhibited by both 1-deoxymannojirimycin and kifunensine. Involved in the maturation of Asn-linked oligosaccharides. Progressively trim alpha-1,2-linked mannose residues from Man(9)GlcNAc(2) to produce Man(5)GlcNAc(2). This is Mannosyl-oligosaccharide 1,2-alpha-mannosidase IA (MAN1A1) from Homo sapiens (Human).